Reading from the N-terminus, the 499-residue chain is Bifunctional purine biosynthesis protein PurH (499 aa).

The region spanning 1 to 144 is the MGS-like domain; it reads MIKRALISVF…KNFKDVVVLT (144 aa).

This sequence belongs to the PurH family.

It catalyses the reaction (6R)-10-formyltetrahydrofolate + 5-amino-1-(5-phospho-beta-D-ribosyl)imidazole-4-carboxamide = 5-formamido-1-(5-phospho-D-ribosyl)imidazole-4-carboxamide + (6S)-5,6,7,8-tetrahydrofolate. It carries out the reaction IMP + H2O = 5-formamido-1-(5-phospho-D-ribosyl)imidazole-4-carboxamide. The protein operates within purine metabolism; IMP biosynthesis via de novo pathway; 5-formamido-1-(5-phospho-D-ribosyl)imidazole-4-carboxamide from 5-amino-1-(5-phospho-D-ribosyl)imidazole-4-carboxamide (10-formyl THF route): step 1/1. Its pathway is purine metabolism; IMP biosynthesis via de novo pathway; IMP from 5-formamido-1-(5-phospho-D-ribosyl)imidazole-4-carboxamide: step 1/1. The protein is Bifunctional purine biosynthesis protein PurH of Clostridium botulinum (strain Langeland / NCTC 10281 / Type F).